A 179-amino-acid chain; its full sequence is ATP synthase subunit b, chloroplastic (179 aa).

The chain crosses the membrane as a helical span at residues 35 to 51 (IVILGGGIFKLGSTALS).

The protein belongs to the ATPase B chain family. As to quaternary structure, F-type ATPases have 2 components, F(1) - the catalytic core - and F(0) - the membrane proton channel. F(1) has five subunits: alpha(3), beta(3), gamma(1), delta(1), epsilon(1). F(0) has four main subunits: a(1), b(1), b'(1) and c(10-14). The alpha and beta chains form an alternating ring which encloses part of the gamma chain. F(1) is attached to F(0) by a central stalk formed by the gamma and epsilon chains, while a peripheral stalk is formed by the delta, b and b' chains.

Its subcellular location is the plastid. It is found in the chloroplast thylakoid membrane. F(1)F(0) ATP synthase produces ATP from ADP in the presence of a proton or sodium gradient. F-type ATPases consist of two structural domains, F(1) containing the extramembraneous catalytic core and F(0) containing the membrane proton channel, linked together by a central stalk and a peripheral stalk. During catalysis, ATP synthesis in the catalytic domain of F(1) is coupled via a rotary mechanism of the central stalk subunits to proton translocation. Functionally, component of the F(0) channel, it forms part of the peripheral stalk, linking F(1) to F(0). This Emiliania huxleyi (Coccolithophore) protein is ATP synthase subunit b, chloroplastic.